Reading from the N-terminus, the 371-residue chain is MLMNFVNNVSKTINGGARIVYVGSFSWAVLSLLFVTAFSGWNNIFSMLPHEIFILVLTISLPIALIVLIFMLSQIVRTVESVKSEISTLSQRDPVSEEAVTMLADLFREHRDAVAAQVAAQVEATAQLVQINQDNRALAAPSPDSGDENPLALLAQMFREYRETVTAQLEAQISATTQLVEASRDSRDGIVDELRSQRVLSQEITQELSHIAQSRNVVPVAEPGLDPSQRIDRMRALAEVLGLALNDLSMTATQLLSEHLNAAHGDREGTQKFISTLTNAYFAGDKNVFFRSLVSEVVNHSDQLQQCAIGAENVRQQISKILREAREIRSLVSACDPNDLVRIVFEDGELWALEKALAEHFLIDGTPISDA.

Residues 1-18 are Cytoplasmic-facing; sequence MLMNFVNNVSKTINGGAR. Residues 19 to 39 traverse the membrane as a helical segment; that stretch reads IVYVGSFSWAVLSLLFVTAFS. The Lumenal segment spans residues 40–51; the sequence is GWNNIFSMLPHE. The helical transmembrane segment at 52 to 72 threads the bilayer; the sequence is IFILVLTISLPIALIVLIFML. Residues 73–371 lie on the Cytoplasmic side of the membrane; sequence SQIVRTVESV…LIDGTPISDA (299 aa).

This sequence belongs to the magnetosome MamY family. As to quaternary structure, probably interacts with MamX and MamZ proteins.

The protein resides in the magnetosome membrane. May be involved in constriction of the cell inner membrane to form mature magnetosomes. Binds cardiolipin and liposomes. May function with MamX, MamZ amd Mms6 in biomineralization. This is Liposome tubulation protein MamY from Magnetospirillum gryphiswaldense (strain DSM 6361 / JCM 21280 / NBRC 15271 / MSR-1).